The primary structure comprises 225 residues: UPF0758 protein BCG9842_B0662 (225 aa).

Positions 103 to 225 (SIRSPEDCAK…FVSLKEKGHI (123 aa)) constitute an MPN domain. Zn(2+)-binding residues include histidine 174, histidine 176, and aspartate 187. The JAMM motif motif lies at 174-187 (HNHPSGDPTPSRED).

The protein belongs to the UPF0758 family.

The polypeptide is UPF0758 protein BCG9842_B0662 (Bacillus cereus (strain G9842)).